Reading from the N-terminus, the 1116-residue chain is Disease resistance protein RGA5 (1116 aa).

The interval 1–177 (MDAPASFSLG…HHGVSANLVG (177 aa)) is structured coiled coil (CC) domain. In terms of domain architecture, NB-ARC spans 182 to 466 (KTKLNRWLSD…WSAEGFVSAN (285 aa)). 9 LRR repeats span residues 608 to 631 (LFQL…ISGL), 633 to 653 (YLET…LVHL), 654 to 675 (PNLL…GCMR), 677 to 701 (LRTL…ELTN), 732 to 755 (LSNL…DISS), 786 to 808 (LHKL…DNLT), 810 to 830 (LPSL…RFIF), 835 to 857 (LPVL…AGAM), and 858 to 882 (PNLQ…LFGI). The interval 935-971 (EEESHPLEKQHHKREKGSSAGHGVLEKESVEDSEKNT) is disordered. The span at 958 to 971 (VLEKESVEDSEKNT) shows a compositional bias: basic and acidic residues. Residues 997–1066 (RTKIVVKVHM…KCGLAELLMV (70 aa)) form the HMA domain. Residues 1000–1070 (IVVKVHMPCG…AELLMVELVE (71 aa)) are HMA-like domain.

It belongs to the disease resistance NB-LRR family. Forms homodimer or heterodimer with RGA4 through its coiled coil (CC) domain. Interacts with AVR1-Pia and AVR-CO39 through its C-terminal part containing the HMA-like domain. Expressed in leaves.

It is found in the cytoplasm. Disease resistance (R) protein that recognizes the AVR-Pia and AVR1-CO39 effector avirulence proteins from M.oryzae. Resistance proteins guard the plant against pathogens that contain an appropriate avirulence protein via an indirect interaction with this avirulence protein. That triggers a defense system including the hypersensitive response, which restricts the pathogen growth. Contribution of RGA4 is required to recognize the effector avirulence proteins AVR-Pia and AVR1-CO39 from M.oryzae. Acts as a repressor of the RGA4-mediated cell death activation. Upon infection, recognition and binding of the AVR effectors relieve the RGA5-mediated repression and triggers the hypersensitive response. Immune response triggered by the RGA4-RGA5 -mediated recognition of AVR1-CO39 confers resistance to X.oryzae pathovars. This is Disease resistance protein RGA5 from Oryza sativa subsp. japonica (Rice).